The sequence spans 110 residues: UPF0339 protein YegP (110 aa).

Repeat copies occupy residues 10-58 (SSDN…RYEK) and 61-109 (ASNG…VKDN).

This sequence belongs to the UPF0339 family. Duplicated subfamily.

The sequence is that of UPF0339 protein YegP (yegP) from Escherichia coli O6:H1 (strain CFT073 / ATCC 700928 / UPEC).